We begin with the raw amino-acid sequence, 341 residues long: 4-hydroxy-2-oxovalerate aldolase (341 aa).

Positions 9–259 constitute a Pyruvate carboxyltransferase domain; that stretch reads VRITEVCLRD…KLDIDLYKMM (251 aa). Residue 17–18 coordinates substrate; that stretch reads RD. Asp-18 is a Mn(2+) binding site. The Proton acceptor role is filled by His-21. Substrate is bound by residues Ser-171 and His-198. Mn(2+)-binding residues include His-198 and His-200. Tyr-289 serves as a coordination point for substrate.

Belongs to the 4-hydroxy-2-oxovalerate aldolase family.

It catalyses the reaction (S)-4-hydroxy-2-oxopentanoate = acetaldehyde + pyruvate. In Bacillus cereus (strain ATCC 10987 / NRS 248), this protein is 4-hydroxy-2-oxovalerate aldolase.